The following is a 191-amino-acid chain: Dephospho-CoA kinase (191 aa).

The DPCK domain maps to 3–191 (AIGITGSYAS…KLIKDLECRV (189 aa)). Position 11–16 (11–16 (ASGKTF)) interacts with ATP.

The protein belongs to the CoaE family.

Its subcellular location is the cytoplasm. The enzyme catalyses 3'-dephospho-CoA + ATP = ADP + CoA + H(+). It functions in the pathway cofactor biosynthesis; coenzyme A biosynthesis; CoA from (R)-pantothenate: step 5/5. Functionally, catalyzes the phosphorylation of the 3'-hydroxyl group of dephosphocoenzyme A to form coenzyme A. In Rickettsia conorii (strain ATCC VR-613 / Malish 7), this protein is Dephospho-CoA kinase.